A 436-amino-acid polypeptide reads, in one-letter code: Probable mediator of RNA polymerase II transcription subunit 26b (436 aa).

The interval 71 to 111 (PGDDEANRGTTGNGGGGTAVDEDYEVAGGSKESKANSSRGD) is disordered. A TFIIS N-terminal domain is found at 139–214 (KEVARIKEIL…AEWKELVDQW (76 aa)). The disordered stretch occupies residues 263–376 (HFFDSLDFDG…PQQEKLKGLD (114 aa)). Basic and acidic residues-rich tracts occupy residues 276 to 290 (NSEEHNTSREHERRP) and 332 to 350 (TEQRMKNETVSVHKSEKPM). Residues 382 to 402 (EFAKRKLQESYQHHENAKKQR) adopt a coiled-coil conformation. The disordered stretch occupies residues 408–436 (EMIPKQGSAQKPQLKRPGMSNRNWANGRK). Positions 427–436 (SNRNWANGRK) are enriched in polar residues.

The protein belongs to the Mediator complex subunit 26 family. In terms of assembly, component of the Mediator complex.

It localises to the nucleus. Component of the Mediator complex, a coactivator involved in the regulated transcription of nearly all RNA polymerase II-dependent genes. Mediator functions as a bridge to convey information from gene-specific regulatory proteins to the basal RNA polymerase II transcription machinery. The Mediator complex, having a compact conformation in its free form, is recruited to promoters by direct interactions with regulatory proteins and serves for the assembly of a functional preinitiation complex with RNA polymerase II and the general transcription factors. May play a role in transcription elongation. This chain is Probable mediator of RNA polymerase II transcription subunit 26b (MED26B), found in Arabidopsis thaliana (Mouse-ear cress).